Reading from the N-terminus, the 1288-residue chain is MSNLPQTQAHHLQPHPQHPQHLLHHHQQQQQQQQQQQQQQHGHHNHSDFPLPDGWDIAKDFDGKTYYIDHINKKTTWLDPRDRYTKPQSFEDCVGDELPVGWEEAYEPNIGRYYINHIAQSTQLEDPRQEWKSVQEQMLSDYLSAAQDQLENKREMYDVKQQRLLLAQEEYNHLNKLAASRSSLCSSSSSMSRHDPELLRADLMLARERVRQLKQELNHITNDISHTERGMNTLYSVGEKINARENGCYDIAEVQAIREEMLKVHKSLVSGEKVREELMRSLVQIKNELSRQQMNEENADLLNAASPFDRVCVASQTDLCGAGESLNGGARFAEMAKTKLQYAEWRKHIKKLQQQLADHVERIEPGQLESDKDRILLIQEKEKLLNDLNSISLKSRSLEETQVIQQTRQKLEDDLKEAYEANNTCIANRLRFHEEKQHLLDKLQEALKSTKLLEERLKSFSSESTFSISSGSSLGSLSTASSKSALSFTDIYVDHFAVDSPIDVVDLQRRSQRFFQQQQQQQQHRLPPVHGHPVLQQQQSSEVSLSPRSSLSMETPPASPMKYNAGADQPQLPPAAASLAPPKEEPTYANALPAPPAYTAPPPAPIAAVRAPHAYDLDSTVLDCMILEAKLKKLNLNSPLNLAAPLSPISEKPSLLDLPQEMLSRSSSTSNTRSVSAAVSNESVAGDSGVFEASRAHLPRRELAQVQIGLKYLKQEGVLVVSLERANNLLALWTASSDNSQVYLRAALLPNSLTSIRTKALGDFQKPVFNDTFAVPISLDKLLTKSLQVTVVSMTGQKEEIIGTVQISMAEFNPDDSTLKWYNVLSSKFMPSFESLDIPSTSAAAAAAAVAANNTNAMNSNSNNNREESSDESTITSSQTSTLTRNQAPPLELQAQIAEELPEHVRLNEQECSDDDDDDDDDDDEEEEDEQQLIGTEELTNSSGMLDTYLKIMKQQYADKETNTECAFPPEKSRAQSQLLDDRPVKRSQTFTPSAAVSKSRYNCRLNRSDSDSAMHFGVTPHTFHRGAAERRSLRFHTKAPKTATKLHHTHIPRTSLDLELDLQAQHSKLFFLNDQIAKLQNLKDVLQKGCESKDPLIAAWAIENEEFQRLVARADPAKCPEERQLQKLLMKTAKEIHKLRKTKVPKGCPDLVSFKEKITFFTRKGLSVPELPSEFILADGDAIEEEEEEDDNAAETAIAINTALVASSNRNKNLSEHHHRAACNSGAVPKRSATPTPITAATTADASASSAPATAAVAPTTAATVSDDKPDQQRFDYVVDRNYGVEV.

Composition is skewed to low complexity over residues 1–15 (MSNL…LQPH) and 28–40 (QQQQ…QQQQ). Residues 1-55 (MSNLPQTQAHHLQPHPQHPQHLLHHHQQQQQQQQQQQQQQHGHHNHSDFPLPDGW) form a disordered region. WW domains lie at 49–82 (FPLP…DPRD) and 96–129 (DELP…DPRQ). Coiled-coil stretches lie at residues 143-170 (LSAA…AQEE), 197-232 (ELLR…RGMN), and 333-461 (AEMA…KSFS). Positions 515 to 584 (FQQQQQQQQH…AAASLAPPKE (70 aa)) are disordered. Composition is skewed to low complexity over residues 534-552 (VLQQ…SSLS) and 565-581 (AGAD…SLAP). Residues 702 to 822 (ELAQVQIGLK…NPDDSTLKWY (121 aa)) form the C2 domain. Disordered stretches follow at residues 856 to 888 (NAMN…RNQA), 905 to 942 (VRLN…LTNS), 964 to 994 (TECA…FTPS), and 1213 to 1277 (KNLS…QRFD). Positions 872–884 (ESTITSSQTSTLT) are enriched in low complexity. A compositionally biased stretch (acidic residues) spans 911–931 (ECSDDDDDDDDDDDEEEEDEQ). The segment covering 1233 to 1265 (SATPTPITAATTADASASSAPATAAVAPTTAAT) has biased composition (low complexity). The segment covering 1267–1277 (SDDKPDQQRFD) has biased composition (basic and acidic residues).

The protein belongs to the WWC family. KIBRA subfamily. As to quaternary structure, forms a complex with Mer and Ex. Interacts (via domain WW 1) with Ex (via RXPPXY motif). Interacts with Mer, Sav, Hpo and Wts.

The protein resides in the cytoplasm. Its subcellular location is the apical cell membrane. Its function is as follows. Regulator of the Hippo/SWH (Sav/Wts/Hpo) signaling pathway, a signaling pathway that plays a pivotal role in organ size control and tumor suppression by restricting proliferation and promoting apoptosis. The core of this pathway is composed of a kinase cascade wherein Hippo (Hpo), in complex with its regulatory protein Salvador (Sav), phosphorylates and activates Warts (Wts) in complex with its regulatory protein Mats, which in turn phosphorylates and inactivates the Yorkie (Yki) oncoprotein. Kibra acts synergistically along with Ex and Mer to regulate the Hippo signaling pathway. This Drosophila willistoni (Fruit fly) protein is Protein kibra (Kibra).